Here is a 172-residue protein sequence, read N- to C-terminus: Shikimate kinase (172 aa).

Position 11 to 16 (11 to 16) interacts with ATP; the sequence is GAGKST. Mg(2+) is bound at residue S15. Residues D33, R57, and G79 each coordinate substrate. R117 is an ATP binding site. R136 serves as a coordination point for substrate. Residue R153 participates in ATP binding.

It belongs to the shikimate kinase family. As to quaternary structure, monomer. Mg(2+) serves as cofactor.

It localises to the cytoplasm. It catalyses the reaction shikimate + ATP = 3-phosphoshikimate + ADP + H(+). It participates in metabolic intermediate biosynthesis; chorismate biosynthesis; chorismate from D-erythrose 4-phosphate and phosphoenolpyruvate: step 5/7. In terms of biological role, catalyzes the specific phosphorylation of the 3-hydroxyl group of shikimic acid using ATP as a cosubstrate. This chain is Shikimate kinase, found in Pseudomonas aeruginosa (strain LESB58).